The sequence spans 364 residues: Chorismate synthase (364 aa).

NADP(+)-binding residues include R48 and R54. FMN is bound by residues 125–127 (RSS), 238–239 (NA), G278, 293–297 (KPTSS), and R319.

Belongs to the chorismate synthase family. Homotetramer. FMNH2 is required as a cofactor.

The enzyme catalyses 5-O-(1-carboxyvinyl)-3-phosphoshikimate = chorismate + phosphate. Its pathway is metabolic intermediate biosynthesis; chorismate biosynthesis; chorismate from D-erythrose 4-phosphate and phosphoenolpyruvate: step 7/7. In terms of biological role, catalyzes the anti-1,4-elimination of the C-3 phosphate and the C-6 proR hydrogen from 5-enolpyruvylshikimate-3-phosphate (EPSP) to yield chorismate, which is the branch point compound that serves as the starting substrate for the three terminal pathways of aromatic amino acid biosynthesis. This reaction introduces a second double bond into the aromatic ring system. The chain is Chorismate synthase from Shewanella sediminis (strain HAW-EB3).